The sequence spans 167 residues: Peptide deformylase (167 aa).

Fe cation is bound by residues Cys91 and His133. Glu134 is an active-site residue. His137 contacts Fe cation.

It belongs to the polypeptide deformylase family. It depends on Fe(2+) as a cofactor.

The catalysed reaction is N-terminal N-formyl-L-methionyl-[peptide] + H2O = N-terminal L-methionyl-[peptide] + formate. Functionally, removes the formyl group from the N-terminal Met of newly synthesized proteins. Requires at least a dipeptide for an efficient rate of reaction. N-terminal L-methionine is a prerequisite for activity but the enzyme has broad specificity at other positions. This chain is Peptide deformylase, found in Nitrosococcus oceani (strain ATCC 19707 / BCRC 17464 / JCM 30415 / NCIMB 11848 / C-107).